The chain runs to 827 residues: Penicillin-binding protein 1A (827 aa).

Residues 1–18 are Cytoplasmic-facing; the sequence is MGKKKKKRKSSAFKIILN. A helical; Signal-anchor for type II membrane protein transmembrane segment spans residues 19–39; that stretch reads VFLSIFLVAGVAFGGIVFAMI. Over 40 to 827 the chain is Extracellular; the sequence is KTAPPLNVQQ…QNHEDNKNKQ (788 aa). The tract at residues 57–229 is transglycosylase; sequence SILYDDKGQY…PSVYYPYSSA (173 aa). The active-site Proton donor; for transglycosylase activity is Glu-96. The interval 357–641 is transpeptidase; the sequence is ASAVIMDYHN…AARLWGDIMK (285 aa). Residue Ser-398 is the Acyl-ester intermediate; for transpeptidase activity of the active site. The disordered stretch occupies residues 755–827; it reads GSLPPTEEKN…QNHEDNKNKQ (73 aa). The span at 760 to 790 shows a compositional bias: basic and acidic residues; that stretch reads TEEKNNSNTRDKNKDKNKDKDKNKNKDKNPS. A compositionally biased stretch (low complexity) spans 791-817; it reads QDKPNNNNNNNNNDNNNNTKPPENDSN. The segment covering 818-827 has biased composition (basic and acidic residues); that stretch reads QNHEDNKNKQ.

The protein in the N-terminal section; belongs to the glycosyltransferase 51 family. It in the C-terminal section; belongs to the transpeptidase family.

It is found in the cell membrane. It carries out the reaction [GlcNAc-(1-&gt;4)-Mur2Ac(oyl-L-Ala-gamma-D-Glu-L-Lys-D-Ala-D-Ala)](n)-di-trans,octa-cis-undecaprenyl diphosphate + beta-D-GlcNAc-(1-&gt;4)-Mur2Ac(oyl-L-Ala-gamma-D-Glu-L-Lys-D-Ala-D-Ala)-di-trans,octa-cis-undecaprenyl diphosphate = [GlcNAc-(1-&gt;4)-Mur2Ac(oyl-L-Ala-gamma-D-Glu-L-Lys-D-Ala-D-Ala)](n+1)-di-trans,octa-cis-undecaprenyl diphosphate + di-trans,octa-cis-undecaprenyl diphosphate + H(+). The catalysed reaction is Preferential cleavage: (Ac)2-L-Lys-D-Ala-|-D-Ala. Also transpeptidation of peptidyl-alanyl moieties that are N-acyl substituents of D-alanine.. The protein operates within cell wall biogenesis; peptidoglycan biosynthesis. Functionally, cell wall formation. Synthesis of cross-linked peptidoglycan from the lipid intermediates. The enzyme has a penicillin-insensitive transglycosylase N-terminal domain (formation of linear glycan strands) and a penicillin-sensitive transpeptidase C-terminal domain (cross-linking of the peptide subunits). This is Penicillin-binding protein 1A (pbpA) from Clostridium botulinum (strain Langeland / NCTC 10281 / Type F).